The sequence spans 393 residues: Lipoyl synthase, mitochondrial (393 aa).

[4Fe-4S] cluster is bound by residues C115, C120, C126, C146, C150, C153, and S362. The region spanning 131–351 (ETGTATATIM…RILGMDMGFR (221 aa)) is the Radical SAM core domain.

This sequence belongs to the radical SAM superfamily. Lipoyl synthase family. The cofactor is [4Fe-4S] cluster.

It is found in the mitochondrion. It catalyses the reaction [[Fe-S] cluster scaffold protein carrying a second [4Fe-4S](2+) cluster] + N(6)-octanoyl-L-lysyl-[protein] + 2 oxidized [2Fe-2S]-[ferredoxin] + 2 S-adenosyl-L-methionine + 4 H(+) = [[Fe-S] cluster scaffold protein] + N(6)-[(R)-dihydrolipoyl]-L-lysyl-[protein] + 4 Fe(3+) + 2 hydrogen sulfide + 2 5'-deoxyadenosine + 2 L-methionine + 2 reduced [2Fe-2S]-[ferredoxin]. It participates in protein modification; protein lipoylation via endogenous pathway; protein N(6)-(lipoyl)lysine from octanoyl-[acyl-carrier-protein]: step 2/2. Its function is as follows. Catalyzes the radical-mediated insertion of two sulfur atoms into the C-6 and C-8 positions of the octanoyl moiety bound to the lipoyl domains of lipoate-dependent enzymes, thereby converting the octanoylated domains into lipoylated derivatives. This Vitis vinifera (Grape) protein is Lipoyl synthase, mitochondrial.